The chain runs to 404 residues: Glycosylated lysosomal membrane protein (404 aa).

A signal peptide spans 1–35; that stretch reads MFRCWGPHWGWVPCAPTPWLLLSLLVCSAPFGLQG. At 36-370 the chain is on the lumenal side; that stretch reads EETRQVSMEV…VDIFSPLVLG (335 aa). N-linked (GlcNAc...) asparagine glycosylation is found at Asn-64, Asn-85, Asn-94, Asn-133, Asn-157, Asn-166, Asn-185, Asn-228, and Asn-331. The helical transmembrane segment at 371-391 threads the bilayer; that stretch reads IMAVALGAPGLMFLGGGLFLL. Residues 392–404 lie on the Cytoplasmic side of the membrane; sequence LRHRRYSEYQSIN. The Lysosomal targeting motif motif lies at 400–404; it reads YQSIN.

This sequence belongs to the GLMP family. Interacts (via lumenal domain) with lysosomal protein MFSD1; the interaction starts while both proteins are still in the endoplasmic reticulum and is required for stabilization of MFSD1 in lysosomes but has no direct effect on its targeting to lysosomes or transporter activity. In terms of processing, highly N-glycosylated. N-glycosylation is essential for GLMP stability and for MFSD1 lysosomal localization. Detected in brain, heart, liver, kidney, lung, intestine, testis and spleen. Expressed at highest levels in kidney cortex. However, another study reports highest expression levels in lung. Expressed in myoblasts with expression increasing during differentiation into myotubes.

The protein resides in the lysosome membrane. Functionally, required to protect lysosomal transporter MFSD1 from lysosomal proteolysis and for MFSD1 lysosomal localization. The chain is Glycosylated lysosomal membrane protein from Mus musculus (Mouse).